A 572-amino-acid polypeptide reads, in one-letter code: Terminal nucleotidyltransferase 4B (572 aa).

Positions 1-105 (MYRSGERLLG…ADGGGVVYSG (105 aa)) are disordered. A compositionally biased stretch (polar residues) spans 25–34 (ETTNNNNNHH). Low complexity predominate over residues 36-76 (PGAWARRAGSSASSPPSASSSPHPSAAVPAADPADSASGSS). The span at 89 to 102 (RAAGGGRADGGGVV) shows a compositional bias: gly residues. V151 participates in a covalent cross-link: Glycyl lysine isopeptide (Lys-Gly) (interchain with G-Cter in SUMO2). Residues D177 and D179 each coordinate Mg(2+). Residues G240, K265, S283, Y284, N368, and R372 each coordinate ATP. The PAP-associated domain maps to 308 to 368 (NYGVLLIEFF…YIEDPLQPGN (61 aa)). The segment at 435 to 572 (KNRPEPSCNG…RDAPLSDLCR (138 aa)) is disordered. A compositionally biased stretch (low complexity) spans 446–464 (VSSSSATQSSSSDVDSDAT). K470 participates in a covalent cross-link: Glycyl lysine isopeptide (Lys-Gly) (interchain with G-Cter in SUMO2). Over residues 477–494 (STGNRVGSQDVSLESSQA) the composition is skewed to polar residues. The residue at position 484 (S484) is a Phosphoserine. Residues K497, K512, and K526 each participate in a glycyl lysine isopeptide (Lys-Gly) (interchain with G-Cter in SUMO2) cross-link. Positions 499-514 (QSTQTTNTSNSTNKSQ) are enriched in low complexity. Over residues 522 to 553 (RSSSKGFQGTTQTSHGSLMTNKQHQGKSNNQY) the composition is skewed to polar residues. Positions 557 to 563 (KKRKHKR) match the Basic, involved in binding of the RNA primer motif.

It belongs to the DNA polymerase type-B-like family. In terms of assembly, component of a nucleolar TRAMP-like complex, an ATP-dependent exosome regulatory complex consisting of a helicase (MTREX), an oligadenylate polymerase (TENT4B or TENT4A), and a substrate specific RNA-binding factor (ZCCHC7 or ZCCHC8). Several TRAMP-like complexes exist with specific compositions and are associated with nuclear, or nucleolar RNA exosomes. Interacts with CPEB1; the interaction is required for TENT4B-mediated translational control. It depends on Mg(2+) as a cofactor. Requires Mn(2+) as cofactor.

The protein localises to the nucleus. It is found in the nucleolus. The protein resides in the cytoplasm. The catalysed reaction is RNA(n) + ATP = RNA(n)-3'-adenine ribonucleotide + diphosphate. In terms of biological role, terminal nucleotidyltransferase that catalyzes preferentially the transfer of ATP and GTP on RNA 3' poly(A) tail creating a heterogeneous 3' poly(A) tail leading to mRNAs stabilization by protecting mRNAs from active deadenylation. Also functions as a catalytic subunit of a TRAMP-like complex which has a poly(A) RNA polymerase activity and is involved in a post-transcriptional quality control mechanism. Polyadenylation with short oligo(A) tails is required for the degradative activity of the exosome on several of its nuclear RNA substrates. Doesn't need a cofactor for polyadenylation activity (in vitro). Required for cytoplasmic polyadenylation of mRNAs involved in carbohydrate metabolism, including the glucose transporter SLC2A1/GLUT1. Plays a role in replication-dependent histone mRNA degradation, probably through terminal uridylation of mature histone mRNAs. May play a role in sister chromatid cohesion. Mediates 3' adenylation of the microRNA MIR21 followed by its 3'-to-5' trimming by the exoribonuclease PARN leading to degradation. Mediates 3' adenylation of H/ACA box snoRNAs (small nucleolar RNAs) followed by its 3'-to-5' trimming by the exoribonuclease PARN which enhances snoRNA stability and maturation. This chain is Terminal nucleotidyltransferase 4B, found in Homo sapiens (Human).